The chain runs to 561 residues: BTB/POZ domain-containing protein At2g46260 (561 aa).

Disordered stretches follow at residues 1-31 (MRGS…EGDF) and 100-119 (LTDN…NLDD). Polar residues predominate over residues 17-28 (DSNFSRHGSSSE). Acidic residues predominate over residues 107–119 (DMDDAPGGDNLDD). The 70-residue stretch at 143 to 212 (IDCSTVVRVK…MYSNSLSVTT (70 aa)) folds into the BTB domain. Positions 266–358 (QPLTDAAKQF…YMTCRKLKKV (93 aa)) constitute a BACK domain.

It participates in protein modification; protein ubiquitination. In terms of biological role, may act as a substrate-specific adapter of an E3 ubiquitin-protein ligase complex (CUL3-RBX1-BTB) which mediates the ubiquitination and subsequent proteasomal degradation of target proteins. In Arabidopsis thaliana (Mouse-ear cress), this protein is BTB/POZ domain-containing protein At2g46260.